Consider the following 469-residue polypeptide: Aspartyl/glutamyl-tRNA(Asn/Gln) amidotransferase subunit B (469 aa).

It belongs to the GatB/GatE family. GatB subfamily. Heterotrimer of A, B and C subunits.

The catalysed reaction is L-glutamyl-tRNA(Gln) + L-glutamine + ATP + H2O = L-glutaminyl-tRNA(Gln) + L-glutamate + ADP + phosphate + H(+). The enzyme catalyses L-aspartyl-tRNA(Asn) + L-glutamine + ATP + H2O = L-asparaginyl-tRNA(Asn) + L-glutamate + ADP + phosphate + 2 H(+). Functionally, allows the formation of correctly charged Asn-tRNA(Asn) or Gln-tRNA(Gln) through the transamidation of misacylated Asp-tRNA(Asn) or Glu-tRNA(Gln) in organisms which lack either or both of asparaginyl-tRNA or glutaminyl-tRNA synthetases. The reaction takes place in the presence of glutamine and ATP through an activated phospho-Asp-tRNA(Asn) or phospho-Glu-tRNA(Gln). The protein is Aspartyl/glutamyl-tRNA(Asn/Gln) amidotransferase subunit B of Methanococcus vannielii (strain ATCC 35089 / DSM 1224 / JCM 13029 / OCM 148 / SB).